The primary structure comprises 272 residues: Large ribosomal subunit protein uL4 (272 aa).

This sequence belongs to the universal ribosomal protein uL4 family. Part of the 50S ribosomal subunit.

One of the primary rRNA binding proteins, this protein initially binds near the 5'-end of the 23S rRNA. It is important during the early stages of 50S assembly. It makes multiple contacts with different domains of the 23S rRNA in the assembled 50S subunit and ribosome. In terms of biological role, forms part of the polypeptide exit tunnel. This chain is Large ribosomal subunit protein uL4, found in Aeropyrum pernix (strain ATCC 700893 / DSM 11879 / JCM 9820 / NBRC 100138 / K1).